A 215-amino-acid polypeptide reads, in one-letter code: uncharacterized protein (215 aa).

The next 5 membrane-spanning stretches (helical) occupy residues 1–21 (MTAE…AIGM), 36–56 (VLIG…FADV), 67–87 (SRIA…NILV), 92–112 (IVGL…MVIG), and 118–138 (LGIY…QLTF).

The protein belongs to the MgtC/SapB family.

It localises to the cell inner membrane. This is an uncharacterized protein from Escherichia coli O157:H7.